Consider the following 463-residue polypeptide: MFS-type transporter criB (463 aa).

The next 11 membrane-spanning stretches (helical) occupy residues 5 to 27, 46 to 66, 83 to 103, 106 to 126, 141 to 161, 168 to 188, 256 to 276, 293 to 313, 323 to 343, 355 to 375, and 402 to 422; these read LVLS…SGIM, MVGT…LTAG, VFVV…MLLI, LVTG…QAEI, LMLA…SFVN, MPLA…YFLP, LFLG…VINY, IFLS…ALFF, LMMA…LTAA, VAMI…LSWV, and FYFL…FLYP.

Belongs to the major facilitator superfamily. Sugar transporter (TC 2.A.1.1) family.

Its subcellular location is the membrane. In terms of biological role, MFS-type transporter; part of the gene cluster that mediates the biosynthesis of echinulin family alkaloid. This is MFS-type transporter criB from Aspergillus cristatus (Chinese Fuzhuan brick tea-fermentation fungus).